A 157-amino-acid chain; its full sequence is Vesicle transport protein SFT2B (157 aa).

N-acetylmethionine is present on methionine 1. At 1-36 (MDKLKKVLSGQDTEDRSGLSEVVESSSLSWSTRIKG) the chain is on the cytoplasmic side. Phosphoserine is present on serine 9. The chain crosses the membrane as a helical span at residues 37-57 (FIVCFALGILCSLLGTLLLWV). The Lumenal portion of the chain corresponds to 58 to 61 (SRKG). Residues 62-82 (LFAVFYTLGNITSIGSTMFLM) traverse the membrane as a helical segment. At 83–96 (GPLKQLKRMFEPTR) the chain is on the cytoplasmic side. A helical transmembrane segment spans residues 97–117 (LIATILVLLFFVLTLCSAFLW). At 118 to 120 (NKG) the chain is on the lumenal side. The chain crosses the membrane as a helical span at residues 121-141 (LALIFCILQSLALTWYSLSYI). Residues 142 to 157 (PYARDAVKKCFAVCLT) lie on the Cytoplasmic side of the membrane.

Belongs to the SFT2 family.

The protein resides in the membrane. In terms of biological role, may be involved in fusion of retrograde transport vesicles derived from an endocytic compartment with the Golgi complex. This chain is Vesicle transport protein SFT2B, found in Rattus norvegicus (Rat).